Here is a 162-residue protein sequence, read N- to C-terminus: 2-C-methyl-D-erythritol 2,4-cyclodiphosphate synthase (162 aa).

A divalent metal cation contacts are provided by aspartate 9 and histidine 11. 4-CDP-2-C-methyl-D-erythritol 2-phosphate is bound by residues 9-11 (DFH) and 37-38 (HS). Residue histidine 45 coordinates a divalent metal cation. Residues 59–61 (DIG), 64–68 (FPDTD), 135–138 (TTSE), and arginine 145 each bind 4-CDP-2-C-methyl-D-erythritol 2-phosphate.

Belongs to the IspF family. Homotrimer. A divalent metal cation serves as cofactor.

It carries out the reaction 4-CDP-2-C-methyl-D-erythritol 2-phosphate = 2-C-methyl-D-erythritol 2,4-cyclic diphosphate + CMP. It participates in isoprenoid biosynthesis; isopentenyl diphosphate biosynthesis via DXP pathway; isopentenyl diphosphate from 1-deoxy-D-xylulose 5-phosphate: step 4/6. In terms of biological role, involved in the biosynthesis of isopentenyl diphosphate (IPP) and dimethylallyl diphosphate (DMAPP), two major building blocks of isoprenoid compounds. Catalyzes the conversion of 4-diphosphocytidyl-2-C-methyl-D-erythritol 2-phosphate (CDP-ME2P) to 2-C-methyl-D-erythritol 2,4-cyclodiphosphate (ME-CPP) with a corresponding release of cytidine 5-monophosphate (CMP). The chain is 2-C-methyl-D-erythritol 2,4-cyclodiphosphate synthase from Leptospira biflexa serovar Patoc (strain Patoc 1 / Ames).